The primary structure comprises 214 residues: Nucleoside triphosphate pyrophosphatase (214 aa).

The active-site Proton acceptor is the D79.

This sequence belongs to the Maf family. A divalent metal cation serves as cofactor.

It is found in the cytoplasm. The enzyme catalyses a ribonucleoside 5'-triphosphate + H2O = a ribonucleoside 5'-phosphate + diphosphate + H(+). The catalysed reaction is a 2'-deoxyribonucleoside 5'-triphosphate + H2O = a 2'-deoxyribonucleoside 5'-phosphate + diphosphate + H(+). Its function is as follows. Nucleoside triphosphate pyrophosphatase. May have a dual role in cell division arrest and in preventing the incorporation of modified nucleotides into cellular nucleic acids. The polypeptide is Nucleoside triphosphate pyrophosphatase (Rhodococcus opacus (strain B4)).